Consider the following 411-residue polypeptide: Protein DDI1 homolog 2 (411 aa).

Residues 1–81 (MLLTVFCAPR…LVLRQAERLR (81 aa)) enclose the Ubiquitin-like domain. Residues 82–144 (APPQPTVPGL…SGVSPQGLDN (63 aa)) are disordered. The segment covering 108 to 121 (QNRNRPQQAQRPST) has biased composition (low complexity). Aspartate 262 is a catalytic residue. Residues 387–406 (DEIADRELAEAIQRSVQDSG) carry the Ubiquitin-binding motif.

Belongs to the DDI1 family. Homodimer.

Its subcellular location is the cytoplasm. The protein localises to the cytosol. It is found in the chromosome. Functionally, aspartic protease that mediates the cleavage of NFE2L1/NRF1 at 'Leu-104', thereby promoting release of NFE2L1/NRF1 from the endoplasmic reticulum membrane. Ubiquitination of NFE2L1/NRF1 is a prerequisite for cleavage, suggesting that DDI2 specifically recognizes and binds ubiquitinated NFE2L1/NRF1. Seems to act as a proteasomal shuttle which links the proteasome and replication fork proteins like RTF2. Required for cellular survival following replication stress. The protein is Protein DDI1 homolog 2 (ddi2) of Danio rerio (Zebrafish).